Here is a 1275-residue protein sequence, read N- to C-terminus: Membrane-associated guanylate kinase, WW and PDZ domain-containing protein 2 (1275 aa).

The PDZ 1 domain maps to 17 to 101 (ESVIGRNPEG…PLRLKCVKQG (85 aa)). A Guanylate kinase-like domain is found at 109 to 283 (RHYLNLRFQK…PVYSQPEELK (175 aa)). The disordered stretch occupies residues 203 to 305 (LPGATPSAEG…ENEDSDPLPD (103 aa)). Basic and acidic residues predominate over residues 280 to 295 (EELKDQMDDTKPTKPE). 2 WW domains span residues 301–334 (DPLP…DPRL) and 347–380 (NELP…NPVL). Positions 301–380 (DPLPDNWEMA…RRTQFENPVL (80 aa)) are interaction with DDN. Residue Tyr-361 is modified to Phosphotyrosine. PDZ domains are found at residues 425 to 509 (STTL…CRGY) and 604 to 682 (TLTI…HRGG). Ser-685 is modified (phosphoserine). The interval 698–740 (ENQGSPQTSLSAPAVPQNLPFPPALHRSSFPDSTEAFDPRKPD) is disordered. Positions 699–708 (NQGSPQTSLS) are enriched in polar residues. The PDZ 4 domain occupies 777–859 (DVHLRRMESG…NGQVNLTVRR (83 aa)). At Tyr-826 the chain carries Phosphotyrosine. The disordered stretch occupies residues 868 to 912 (CPENGRSPGSVSTHHSSPRSDYATYSNSNHAAPSSNASPPEGFAS). Residues Ser-883 and Ser-884 each carry the phosphoserine modification. Low complexity predominate over residues 893 to 907 (SNSNHAAPSSNASPP). The 91-residue stretch at 919 to 1009 (DVVIHRKENE…SVTLRIIPQE (91 aa)) folds into the PDZ 5 domain. The segment covering 1010 to 1040 (ELNSPTSAPSSEKQSPMAQQHSPLAQQSPLA) has biased composition (polar residues). The segment at 1010-1128 (ELNSPTSAPS…PDTRQYPLSD (119 aa)) is disordered. A Phosphoserine modification is found at Ser-1013. The segment covering 1067–1083 (NSYRSEVKARQDVKPDI) has biased composition (basic and acidic residues). A PDZ 6 domain is found at 1139–1221 (TVDMEKGAKG…RVRLLLKRGT (83 aa)).

The protein belongs to the MAGUK family. Interacts (via its WW domains) with DRPLA. Interacts (via its second PDZ domain) with PTEN (via unphosphorylated C-terminus); this interaction diminishes the degradation rate of PTEN. Interacts (via guanylate kinase domain) with DLGAP1. Interacts (via the PDZ domains) with GRIN2A, GRID2 and NLGN1. Interacts with CTNND2, CTNNB1 and MAGUIN-1. Interacts with ACVR2A, SMAD2 and SMAD3. Part of a complex consisting of MAGI2/ARIP1, ACVR2A, ACVR1B and SMAD3. May interact with HTR2A. Interacts with RAPGEF2. Identified in a complex with ACTN4, CASK, IQGAP1, NPHS1, SPTAN1 and SPTBN1. Interacts with DDN. Found in a complex, at least composed of KIDINS220, MAGI2, NTRK1 and RAPGEF2; the complex is mainly formed at late endosomes in a NGF-dependent manner. Interacts with RAPGEF2; the interaction occurs before or after nerve growth factor (NGF) stimulation. Interacts (via PDZ domain) with KIDINS220 (via C-terminal domain). Interacts with IGSF9 and HTR4. Interacts with DLL1. Found in a complex with IGSF9B and NLGN2; the interaction with IGSF9B is mediated via the PDZ 5 and PDZ 6 domains, while the interaction with NLGN2 is mediated via the WW1, WW2 and PDZ2 domains. Interacts (via PDZ 6 domain) with USH1G (via SAM domain); the interaction is triggered by phosphorylation of USH1G by CK2 and negatively regulates MAGI2-mediated endocytosis. Expressed throughout the retina except in the nuclear layers and the photoreceptor outer segments (at protein level). Highest retinal expression is observed in the outer plexiform layer, the outer limiting membrane and the inner segment of photoreceptor cells (at protein level). Expressed in brain.

Its subcellular location is the cytoplasm. It localises to the late endosome. The protein localises to the synapse. It is found in the synaptosome. The protein resides in the cell membrane. Its subcellular location is the cytoskeleton. It localises to the microtubule organizing center. The protein localises to the centrosome. It is found in the cell projection. The protein resides in the cilium. Its subcellular location is the centriole. It localises to the photoreceptor inner segment. The protein localises to the photoreceptor outer segment. Its function is as follows. Seems to act as a scaffold molecule at synaptic junctions by assembling neurotransmitter receptors and cell adhesion proteins. Plays a role in nerve growth factor (NGF)-induced recruitment of RAPGEF2 to late endosomes and neurite outgrowth. May play a role in regulating activin-mediated signaling in neuronal cells. Enhances the ability of PTEN to suppress AKT1 activation. Plays a role in receptor-mediated clathrin-dependent endocytosis which is required for ciliogenesis. The sequence is that of Membrane-associated guanylate kinase, WW and PDZ domain-containing protein 2 (Magi2) from Mus musculus (Mouse).